Consider the following 338-residue polypeptide: Heme A synthase (338 aa).

5 helical membrane passes run isoleucine 6–isoleucine 26, glycine 93–isoleucine 113, isoleucine 118–methionine 138, leucine 154–lysine 174, and valine 201–tyrosine 221. Residue histidine 256 participates in heme binding. The next 3 helical transmembrane spans lie at leucine 258–glutamate 278, isoleucine 285–leucine 305, and valine 308–isoleucine 328. Histidine 316 serves as a coordination point for heme.

The protein belongs to the COX15/CtaA family. Type 2 subfamily. Interacts with CtaB. It depends on heme b as a cofactor.

Its subcellular location is the cell membrane. The catalysed reaction is Fe(II)-heme o + 2 A + H2O = Fe(II)-heme a + 2 AH2. It functions in the pathway porphyrin-containing compound metabolism; heme A biosynthesis; heme A from heme O: step 1/1. In terms of biological role, catalyzes the conversion of heme O to heme A by two successive hydroxylations of the methyl group at C8. The first hydroxylation forms heme I, the second hydroxylation results in an unstable dihydroxymethyl group, which spontaneously dehydrates, resulting in the formyl group of heme A. The polypeptide is Heme A synthase (Rickettsia canadensis (strain McKiel)).